A 150-amino-acid chain; its full sequence is 3-hydroxyacyl-[acyl-carrier-protein] dehydratase FabZ (150 aa).

The active site involves H54.

This sequence belongs to the thioester dehydratase family. FabZ subfamily.

The protein localises to the cytoplasm. The catalysed reaction is a (3R)-hydroxyacyl-[ACP] = a (2E)-enoyl-[ACP] + H2O. In terms of biological role, involved in unsaturated fatty acids biosynthesis. Catalyzes the dehydration of short chain beta-hydroxyacyl-ACPs and long chain saturated and unsaturated beta-hydroxyacyl-ACPs. In Vibrio atlanticus (strain LGP32) (Vibrio splendidus (strain Mel32)), this protein is 3-hydroxyacyl-[acyl-carrier-protein] dehydratase FabZ.